Here is a 740-residue protein sequence, read N- to C-terminus: Gramillins biosynthetic cluster protein FGSG_11657 (740 aa).

Disordered regions lie at residues 353-391, 414-434, 514-535, and 656-686; these read QADSPVPLSSVKEESGLGKLARSPAEPAPSRPLPGSSIP, SKLSDEAEADTSIKPDSDAAS, PKEQEEPKRHRTSNNSIVGSSD, and EHEGEGRADTNRHVSTQSNMPTEQSLLPQGD. Over residues 656-667 the composition is skewed to basic and acidic residues; the sequence is EHEGEGRADTNR. The span at 668–682 shows a compositional bias: polar residues; it reads HVSTQSNMPTEQSLL.

It participates in mycotoxin biosynthesis. Part of the gene cluster that mediates the biosynthesis of gramillins A and B, bicyclic lipopeptides that induce cell death in maize leaves but not in wheat leaves. The nonribosomal peptide synthetase GRA1 incorporates respectively a glutamic adic (Glu), a leucine (Leu), a serine (Ser), a hydroxyglutamine (HOGln), a 2-amino decanoic acid, and 2 cysteins (CysB and CysA). The biosynthesis of 2-amino decanoic acid incorporated in gramillins could be initiated by a fatty acid synthase composed of the alpha and beta subunits FGSG_00036 and FGSG_11656. The cytochrome P450 monooxygenase FGSG_15680 could hydroxylate the fatty acid chain. Subsequent oxidation to the ketone by the oxidoreductase FGSG_00048 and transamination by aminotransferase FGSG_00049 could form 2-amino-decanoic acid. On the other hand, FGSG_15680 could also be responsible for the HO-modified glutamine at the gamma-position. Whether hydroxylation occurs on the fully assembled product or on the Gln residue prior to assembly into the gramillins requires further proof. The thioredoxin FGSG_00043 could also be required for the disulfide-bond formation between CysA and CysB. The specific involvement of the remaining proteins from the cluster is more difficult to discern, but could have broader regulatory (FGSG_00040 and FGSG_11657) or enzymatic functions (FGSG_00044 and FGSG_00045). The final C-domain of GRA1 does not possess the expected sequence of a termination CT domain, often implicated in macrocyclization and release of a cyclopeptidein fungal NRPs; and the thioesterase FGSG_00047 may act in concert with the terminal C-domain of GRA1 to catalyze the formation of the macrocyclic anhydride and release of the products. The protein is Gramillins biosynthetic cluster protein FGSG_11657 of Gibberella zeae (strain ATCC MYA-4620 / CBS 123657 / FGSC 9075 / NRRL 31084 / PH-1) (Wheat head blight fungus).